The following is a 31-amino-acid chain: Cliotide T17 (31 aa).

Positions 1 to 31 (GTVPCGESCVFIPCITGIAGCSCKNKVCYLN) form a cross-link, cyclopeptide (Gly-Asn). 3 cysteine pairs are disulfide-bonded: Cys-5–Cys-21, Cys-9–Cys-23, and Cys-14–Cys-28.

Post-translationally, contains 3 disulfide bonds. In terms of processing, this is a cyclic peptide. As to expression, expressed in root nodules but not in seed.

Probably participates in a plant defense mechanism. This is Cliotide T17 from Clitoria ternatea (Butterfly pea).